The following is a 590-amino-acid chain: Aspartate--tRNA(Asp/Asn) ligase (590 aa).

Residue glutamate 175 coordinates L-aspartate. Residues glutamine 199–lysine 202 form an aspartate region. Residues arginine 221 and histidine 450 each contribute to the L-aspartate site. Arginine 221–glutamate 223 provides a ligand contact to ATP. Residue glutamate 484 coordinates ATP. Arginine 491 is a binding site for L-aspartate. Glycine 536–arginine 539 contacts ATP.

This sequence belongs to the class-II aminoacyl-tRNA synthetase family. Type 1 subfamily. Homodimer.

It localises to the cytoplasm. It carries out the reaction tRNA(Asx) + L-aspartate + ATP = L-aspartyl-tRNA(Asx) + AMP + diphosphate. Its function is as follows. Aspartyl-tRNA synthetase with relaxed tRNA specificity since it is able to aspartylate not only its cognate tRNA(Asp) but also tRNA(Asn). Reaction proceeds in two steps: L-aspartate is first activated by ATP to form Asp-AMP and then transferred to the acceptor end of tRNA(Asp/Asn). The polypeptide is Aspartate--tRNA(Asp/Asn) ligase (Bradyrhizobium diazoefficiens (strain JCM 10833 / BCRC 13528 / IAM 13628 / NBRC 14792 / USDA 110)).